The sequence spans 315 residues: Ribosomal protein L11 methyltransferase (315 aa).

Positions 162, 183, 205, and 248 each coordinate S-adenosyl-L-methionine.

The protein belongs to the methyltransferase superfamily. PrmA family.

It localises to the cytoplasm. It catalyses the reaction L-lysyl-[protein] + 3 S-adenosyl-L-methionine = N(6),N(6),N(6)-trimethyl-L-lysyl-[protein] + 3 S-adenosyl-L-homocysteine + 3 H(+). Methylates ribosomal protein L11. In Enterococcus faecalis (strain ATCC 700802 / V583), this protein is Ribosomal protein L11 methyltransferase.